The primary structure comprises 79 residues: Short neurotoxin 3 (79 aa).

Positions 1–23 (MKTLLLTLVVMTIVCLDLGYTLT) are cleaved as a signal peptide. 4 cysteine pairs are disulfide-bonded: cysteine 24–cysteine 41, cysteine 34–cysteine 59, cysteine 63–cysteine 71, and cysteine 72–cysteine 77.

The protein belongs to the three-finger toxin family. Short-chain subfamily. As to expression, expressed by the venom gland.

The protein localises to the secreted. The polypeptide is Short neurotoxin 3 (Oxyuranus scutellatus scutellatus (Australian taipan)).